The chain runs to 946 residues: Bifunctional glutamine synthetase adenylyltransferase/adenylyl-removing enzyme (946 aa).

Residues 1–440 are adenylyl removase; it reads MKPLSSPLQQ…VFNELIGDDE (440 aa). An adenylyl transferase region spans residues 449–946; the sequence is SEQWRELWQD…ASWQKWLVEE (498 aa).

The protein belongs to the GlnE family. It depends on Mg(2+) as a cofactor.

It carries out the reaction [glutamine synthetase]-O(4)-(5'-adenylyl)-L-tyrosine + phosphate = [glutamine synthetase]-L-tyrosine + ADP. The enzyme catalyses [glutamine synthetase]-L-tyrosine + ATP = [glutamine synthetase]-O(4)-(5'-adenylyl)-L-tyrosine + diphosphate. Its function is as follows. Involved in the regulation of glutamine synthetase GlnA, a key enzyme in the process to assimilate ammonia. When cellular nitrogen levels are high, the C-terminal adenylyl transferase (AT) inactivates GlnA by covalent transfer of an adenylyl group from ATP to specific tyrosine residue of GlnA, thus reducing its activity. Conversely, when nitrogen levels are low, the N-terminal adenylyl removase (AR) activates GlnA by removing the adenylyl group by phosphorolysis, increasing its activity. The regulatory region of GlnE binds the signal transduction protein PII (GlnB) which indicates the nitrogen status of the cell. The sequence is that of Bifunctional glutamine synthetase adenylyltransferase/adenylyl-removing enzyme from Escherichia coli O127:H6 (strain E2348/69 / EPEC).